The primary structure comprises 255 residues: Undecaprenyl-diphosphatase (255 aa).

Helical transmembrane passes span 1–21 (MDII…FLPI), 75–95 (IIIS…IVYQ), 96–116 (LFTV…FLIV), 174–194 (TEFS…FDIV), 203–223 (GDIS…LITI), and 234–254 (NFVP…MFFV).

Belongs to the UppP family.

Its subcellular location is the cell membrane. The catalysed reaction is di-trans,octa-cis-undecaprenyl diphosphate + H2O = di-trans,octa-cis-undecaprenyl phosphate + phosphate + H(+). In terms of biological role, catalyzes the dephosphorylation of undecaprenyl diphosphate (UPP). In Methanococcus aeolicus (strain ATCC BAA-1280 / DSM 17508 / OCM 812 / Nankai-3), this protein is Undecaprenyl-diphosphatase.